Here is a 406-residue protein sequence, read N- to C-terminus: 5-cytosine rRNA methyltransferase NSUN4 (406 aa).

Positions 207, 208, 209, 226, 231, 259, 260, and 277 each coordinate S-adenosyl-L-methionine. Cys-332 (nucleophile) is an active-site residue.

This sequence belongs to the class I-like SAM-binding methyltransferase superfamily. RsmB/NOP family.

Its subcellular location is the mitochondrion. It carries out the reaction a cytidine in rRNA + S-adenosyl-L-methionine = a 5-methylcytidine in rRNA + S-adenosyl-L-homocysteine + H(+). The enzyme catalyses a cytidine in mRNA + S-adenosyl-L-methionine = a 5-methylcytidine in mRNA + S-adenosyl-L-homocysteine + H(+). Its function is as follows. Mitochondrial RNA cytosine C(5)-methyltransferase that methylates cytosine to 5-methylcytosine (m5C) in various RNAs, such as rRNAs, mRNAs and some long non-coding RNAs (lncRNAs). Involved in mitochondrial ribosome small subunit (SSU) maturation by catalyzing methylation of mitochondrial 12S rRNA. This chain is 5-cytosine rRNA methyltransferase NSUN4 (nsun4), found in Xenopus laevis (African clawed frog).